The primary structure comprises 295 residues: GTPase Era (295 aa).

In terms of domain architecture, Era-type G spans 3 to 171 (KSGFITVIGR…LELMKKYLPE (169 aa)). The interval 11-18 (GRPNVGKS) is G1. Position 11–18 (11–18 (GRPNVGKS)) interacts with GTP. Positions 37–41 (QTTRN) are G2. The G3 stretch occupies residues 58-61 (DTPG). GTP-binding positions include 58-62 (DTPGM) and 120-123 (NKID). The tract at residues 120-123 (NKID) is G4. Residues 150-152 (ISA) are G5. One can recognise a KH type-2 domain in the interval 202–279 (LSEEVPHGIA…SLKVWVKVKK (78 aa)).

The protein belongs to the TRAFAC class TrmE-Era-EngA-EngB-Septin-like GTPase superfamily. Era GTPase family. In terms of assembly, monomer.

The protein localises to the cytoplasm. It is found in the cell membrane. In terms of biological role, an essential GTPase that binds both GDP and GTP, with rapid nucleotide exchange. Plays a role in 16S rRNA processing and 30S ribosomal subunit biogenesis and possibly also in cell cycle regulation and energy metabolism. The polypeptide is GTPase Era (Clostridium tetani (strain Massachusetts / E88)).